A 362-amino-acid polypeptide reads, in one-letter code: Red-sensitive opsin (362 aa).

Over 1 to 49 the chain is Extracellular; the sequence is MAAWEAAFAARRRHEEEDTTRDSVFTYTNSNNTRGPFEGPNYHIAPRWV. N-linked (GlcNAc...) asparagine glycosylation occurs at asparagine 31. The helical transmembrane segment at 50–74 threads the bilayer; the sequence is YNLTSVWMIFVVAASVFTNGLVLVA. At 75 to 86 the chain is on the cytoplasmic side; the sequence is TWKFKKLRHPLN. A helical transmembrane segment spans residues 87-112; that stretch reads WILVNLAVADLGETVIASTISVINQI. Residues 113–126 are Extracellular-facing; that stretch reads SGYFILGHPMCVVE. Cysteines 123 and 200 form a disulfide. The chain crosses the membrane as a helical span at residues 127-146; the sequence is GYTVSACGITALWSLAIISW. At 147–165 the chain is on the cytoplasmic side; the sequence is ERWFVVCKPFGNIKFDGKL. Residues 166–189 form a helical membrane-spanning segment; that stretch reads AVAGILFSWLWSCAWTAPPIFGWS. Residues 190–215 are Extracellular-facing; the sequence is RYWPHGLKTSCGPDVFSGSSDPGVQS. A helical membrane pass occupies residues 216-243; the sequence is YMVVLMVTCCFFPLAIIILCYLQVWLAI. At 244-265 the chain is on the cytoplasmic side; that stretch reads RAVAAQQKESESTQKAEKEVSR. The helical transmembrane segment at 266-289 threads the bilayer; sequence MVVVMIVAYCFCWGPYTFFACFAA. At 290-297 the chain is on the extracellular side; it reads ANPGYAFH. Residues 298–322 form a helical membrane-spanning segment; the sequence is PLAAALPAYFAKSATIYNPIIYVFM. Residue lysine 309 is modified to N6-(retinylidene)lysine. Topologically, residues 323-362 are cytoplasmic; it reads NRQFRNCILQLFGKKVDDGSEVSTSRTEVSSVSNSSVSPA.

The protein belongs to the G-protein coupled receptor 1 family. Opsin subfamily. Phosphorylated on some or all of the serine and threonine residues present in the C-terminal region. As to expression, the color pigments are found in the cone photoreceptor cells.

Its subcellular location is the membrane. In terms of biological role, visual pigments are the light-absorbing molecules that mediate vision. They consist of an apoprotein, opsin, covalently linked to cis-retinal. The sequence is that of Red-sensitive opsin from Gallus gallus (Chicken).